Here is a 373-residue protein sequence, read N- to C-terminus: Meiosis-specific kinetochore protein (373 aa).

2 disordered regions span residues 1 to 91 and 250 to 276; these read MWPL…QDEK and STPE…LTST. Positions 77 to 91 are enriched in basic and acidic residues; the sequence is SLQENRSSEDTQDEK. The POLO box domain (PBD)-binding motif lies at 275–277; sequence STP. A required for localization to kinetochores region spans residues 332–335; sequence EICC.

In terms of assembly, interacts with CENPC. Interacts with PLK1; required for recruitment of PLK1 at kinetochores.

Its subcellular location is the chromosome. The protein resides in the centromere. It is found in the kinetochore. Functionally, key regulator of kinetochore function during meiosis I: required both for mono-orientation of kinetochores on sister chromosomes and protection of centromeric cohesin from separase-mediated cleavage. Acts by facilitating kinetochore mono-orientation during meiosis I, when kinetochores on sister chromosomes face the same direction and are thus captured and pulled by spindle fibers from the same pole. Also required to prevent cleavage of cohesin at centromeres during meiosis I, possibly by acting as a regulator of the shugoshin-dependent protection pathway. Acts in collaboration with PLK1: required for PLK1 enrichment to kinetochores. Not required during meiosis II or mitosis. The chain is Meiosis-specific kinetochore protein from Homo sapiens (Human).